Consider the following 316-residue polypeptide: Aspartate carbamoyltransferase catalytic subunit (316 aa).

Carbamoyl phosphate contacts are provided by Arg-58 and Thr-59. Position 86 (Lys-86) interacts with L-aspartate. The carbamoyl phosphate site is built by Arg-108, His-136, and Gln-139. 2 residues coordinate L-aspartate: Arg-169 and Arg-223. Gly-265 and Pro-266 together coordinate carbamoyl phosphate.

It belongs to the aspartate/ornithine carbamoyltransferase superfamily. ATCase family. In terms of assembly, heterododecamer (2C3:3R2) of six catalytic PyrB chains organized as two trimers (C3), and six regulatory PyrI chains organized as three dimers (R2).

The catalysed reaction is carbamoyl phosphate + L-aspartate = N-carbamoyl-L-aspartate + phosphate + H(+). It functions in the pathway pyrimidine metabolism; UMP biosynthesis via de novo pathway; (S)-dihydroorotate from bicarbonate: step 2/3. Functionally, catalyzes the condensation of carbamoyl phosphate and aspartate to form carbamoyl aspartate and inorganic phosphate, the committed step in the de novo pyrimidine nucleotide biosynthesis pathway. This chain is Aspartate carbamoyltransferase catalytic subunit, found in Anaeromyxobacter sp. (strain Fw109-5).